The following is a 229-amino-acid chain: MSTSKLVVAMDGPSGTGKSSVSRMLAQRLDARYLDTGAMYRIATLHALRKGVDLTDPAAIADATAGLPWSIGTDPAGEQVLLDGEDVGEEIRGDAVTKAVSAVSAVPAVRELLVAAQRRLAGEAERIVVEGRDIGTVVIPDADVKIYLTASAEARAQRRNAQNLAEGRGDDYAAVLADVQRRDHLDSTRAVSPLRPADDSVLVDTSELGIDDVIGRLLLVVSERTGAGQ.

12-20 is an ATP binding site; sequence GPSGTGKSS.

It belongs to the cytidylate kinase family. Type 1 subfamily.

Its subcellular location is the cytoplasm. It catalyses the reaction CMP + ATP = CDP + ADP. The catalysed reaction is dCMP + ATP = dCDP + ADP. This is Cytidylate kinase from Rhodococcus jostii (strain RHA1).